The following is a 258-amino-acid chain: Large ribosomal subunit protein eL8z (258 aa).

A disordered region spans residues M1 to V20.

This sequence belongs to the eukaryotic ribosomal protein eL8 family.

The sequence is that of Large ribosomal subunit protein eL8z (RPL7A-1) from Oryza sativa subsp. japonica (Rice).